Here is a 159-residue protein sequence, read N- to C-terminus: L-alanine exporter AlaE (159 aa).

4 consecutive transmembrane segments (helical) span residues 17–37 (FAMVIFSFITGMMIEVFVSGM), 48–68 (LSIPVNIAIAWPYGVFRDYLL), 86–106 (MVAYVLFQSPVYACILLAVGA), and 110–130 (QIITAVTSNAFVSGALGIVYG).

This sequence belongs to the AlaE exporter family.

It is found in the cell inner membrane. Functionally, exports L-alanine. This Photobacterium profundum (strain SS9) protein is L-alanine exporter AlaE.